The following is a 1020-amino-acid chain: Calcium-transporting ATPase 10, plasma membrane-type (1020 aa).

Over 1–175 the chain is Cytoplasmic; that stretch reads MESYLEENFG…FVWEALQDTT (175 aa). The tract at residues 21-32 is interaction with calmodulin; sequence ALRRWRKLCGVV. 2 consecutive transmembrane segments (helical) span residues 176 to 196 and 199 to 219; these read LIIL…MEGW and GAHD…VTAT. The Cytoplasmic portion of the chain corresponds to 220-263; that stretch reads SDYRQSLQFKDLDKEKKKIQVQVTRNGFRQRLSIYDLLPGDVVH. Transmembrane regions (helical) follow at residues 264 to 284 and 352 to 372; these read LAIG…SLLI and GVAT…FIVL. Topologically, residues 373–400 are cytoplasmic; it reads SQGLISKKYHEGLLLSWSGDDALEMLEH. The chain crosses the membrane as a helical span at residues 401–421; the sequence is FAIAVTIVVVAVPEGLPLAVT. The active-site 4-aspartylphosphate intermediate is the Asp-456. Mg(2+) is bound by residues Asp-758 and Asp-762. A helical membrane pass occupies residues 843 to 863; sequence LTAVQLLWVNMIMDTLGALAL. At 864 to 887 the chain is on the cytoplasmic side; that stretch reads ATEPPNDDLMKREPVGRTGKFITN. The next 2 membrane-spanning stretches (helical) occupy residues 888–907 and 924–944; these read VMWR…MWYL and VVLN…NEIS. The Cytoplasmic segment spans residues 945-961; sequence SREMEKINVLRGILKNY. The next 2 membrane-spanning stretches (helical) occupy residues 962–982 and 995–1015; these read VFLG…QFLG and WIAS…IKLL. Residues 1016–1020 lie on the Cytoplasmic side of the membrane; that stretch reads PVGSS.

The protein belongs to the cation transport ATPase (P-type) (TC 3.A.3) family. Type IIB subfamily.

Its subcellular location is the membrane. The enzyme catalyses Ca(2+)(in) + ATP + H2O = Ca(2+)(out) + ADP + phosphate + H(+). With respect to regulation, activated by calmodulin. In terms of biological role, this magnesium-dependent enzyme catalyzes the hydrolysis of ATP coupled with the translocation of calcium from the cytosol out of the cell, into the endoplasmic reticulum, or into organelles. This Oryza sativa subsp. japonica (Rice) protein is Calcium-transporting ATPase 10, plasma membrane-type.